The primary structure comprises 354 residues: Rhodopsin (354 aa).

Over 1–36 (MNGTEGPNFYVPMSNKTGVVRSPFDYPQYYLAEPWQ) the chain is Extracellular. 2 N-linked (GlcNAc...) asparagine glycosylation sites follow: N2 and N15. A helical transmembrane segment spans residues 37-61 (YSALAAYMFLLILLGLPINFMTLFV). The Cytoplasmic portion of the chain corresponds to 62 to 73 (TIQHKKLRTPLN). A helical membrane pass occupies residues 74–96 (YILLNLVFANHFMVLCGFTVTMY). Over 97–110 (TSMHGYFIFGPTGC) the chain is Extracellular. C110 and C187 are disulfide-bonded. A helical transmembrane segment spans residues 111 to 133 (YIEGFFATLGGEVALWSLVVLAV). The 'Ionic lock' involved in activated form stabilization signature appears at 134 to 136 (ERY). Residues 134 to 152 (ERYIVVCKPMANFRFGENH) lie on the Cytoplasmic side of the membrane. A helical membrane pass occupies residues 153-173 (AIMGVAFTWIMALSCAAPPLF). Over 174 to 202 (GWSRYIPEGMQCSCGVDYYTLKPEVNNES) the chain is Extracellular. Residues 203–224 (FVIYMFIVHFTIPLIVIFFCYG) form a helical membrane-spanning segment. At 225–252 (RLLCTVKEAAAQQQESLTTQKAEKEVTR) the chain is on the cytoplasmic side. The helical transmembrane segment at 253-274 (MVVIMVVFFLICWVPYAYVAFY) threads the bilayer. The Extracellular portion of the chain corresponds to 275–286 (IFTHQGSNFGPV). A helical transmembrane segment spans residues 287-308 (FMTVPAFFAKSSAIYNPVIYIV). Position 296 is an N6-(retinylidene)lysine (K296). The Cytoplasmic portion of the chain corresponds to 309-354 (LNKQFRNCLITTLCCGKNPFGDEDGSSAATSKTEASSVSSSQVSPA). Residues C322 and C323 are each lipidated (S-palmitoyl cysteine). A disordered region spans residues 331–354 (EDGSSAATSKTEASSVSSSQVSPA). Over residues 334 to 354 (SSAATSKTEASSVSSSQVSPA) the composition is skewed to low complexity.

It belongs to the G-protein coupled receptor 1 family. Opsin subfamily. Post-translationally, contains one covalently linked retinal chromophore. Upon light absorption, the covalently bound 11-cis-retinal is converted to all-trans-retinal. After hydrolysis of the Schiff base and release of the covalently bound all-trans-retinal, active rhodopsin is regenerated by binding of a fresh molecule of 11-cis-retinal.

It localises to the membrane. Its subcellular location is the cell projection. The protein localises to the cilium. The protein resides in the photoreceptor outer segment. In terms of biological role, photoreceptor required for image-forming vision at low light intensity. Required for photoreceptor cell viability after birth. Light-induced isomerization of 11-cis to all-trans retinal triggers a conformational change that activates signaling via G-proteins. Subsequent receptor phosphorylation mediates displacement of the bound G-protein alpha subunit by arrestin and terminates signaling. The chain is Rhodopsin (rho) from Xenopus laevis (African clawed frog).